A 139-amino-acid chain; its full sequence is MQKFEFFEHTADIGIRAYGRNLNEAFENAAVAVFEVMTDTSKVEPKEMREVKIDGYDLENLLYRWIESLLVYYDSEIMLFSKFYVNIDEKNLTLEGKAWGEKFDPNKHERRTVVKAMTYHEMKIENKGNYYILTFVVDI.

Ca(2+)-binding residues include aspartate 12, aspartate 138, and isoleucine 139.

It belongs to the archease family.

In terms of biological role, activates the tRNA-splicing ligase complex by facilitating the enzymatic turnover of catalytic subunit RtcB. Acts by promoting the guanylylation of RtcB, a key intermediate step in tRNA ligation. Can also alter the NTP specificity of RtcB such that ATP, dGTP or ITP is used efficiently. This chain is Protein archease, found in Sulfurisphaera tokodaii (strain DSM 16993 / JCM 10545 / NBRC 100140 / 7) (Sulfolobus tokodaii).